A 449-amino-acid polypeptide reads, in one-letter code: Bifunctional protein GlmU (449 aa).

Residues 1–225 are pyrophosphorylase; sequence MLSVAILAAG…NGELQGINNR (225 aa). UDP-N-acetyl-alpha-D-glucosamine is bound by residues 7–10, Lys21, Gln73, and 78–79; these read LAAG and GT. Asp103 provides a ligand contact to Mg(2+). Positions 140, 154, 169, and 223 each coordinate UDP-N-acetyl-alpha-D-glucosamine. Asn223 is a Mg(2+) binding site. A linker region spans residues 226–246; that stretch reads IHLSECEECIQNSIKEKHMLN. Residues 247–449 are N-acetyltransferase; it reads GVTFINKASC…NIENWKKKKS (203 aa). Arg328 and Lys346 together coordinate UDP-N-acetyl-alpha-D-glucosamine. Catalysis depends on His358, which acts as the Proton acceptor. UDP-N-acetyl-alpha-D-glucosamine is bound by residues Tyr361 and Asn372. The acetyl-CoA site is built by Ala375, Ala418, and Arg435.

The protein in the N-terminal section; belongs to the N-acetylglucosamine-1-phosphate uridyltransferase family. It in the C-terminal section; belongs to the transferase hexapeptide repeat family. In terms of assembly, homotrimer. The cofactor is Mg(2+).

It localises to the cytoplasm. It catalyses the reaction alpha-D-glucosamine 1-phosphate + acetyl-CoA = N-acetyl-alpha-D-glucosamine 1-phosphate + CoA + H(+). The catalysed reaction is N-acetyl-alpha-D-glucosamine 1-phosphate + UTP + H(+) = UDP-N-acetyl-alpha-D-glucosamine + diphosphate. The protein operates within nucleotide-sugar biosynthesis; UDP-N-acetyl-alpha-D-glucosamine biosynthesis; N-acetyl-alpha-D-glucosamine 1-phosphate from alpha-D-glucosamine 6-phosphate (route II): step 2/2. Its pathway is nucleotide-sugar biosynthesis; UDP-N-acetyl-alpha-D-glucosamine biosynthesis; UDP-N-acetyl-alpha-D-glucosamine from N-acetyl-alpha-D-glucosamine 1-phosphate: step 1/1. It functions in the pathway bacterial outer membrane biogenesis; LPS lipid A biosynthesis. In terms of biological role, catalyzes the last two sequential reactions in the de novo biosynthetic pathway for UDP-N-acetylglucosamine (UDP-GlcNAc). The C-terminal domain catalyzes the transfer of acetyl group from acetyl coenzyme A to glucosamine-1-phosphate (GlcN-1-P) to produce N-acetylglucosamine-1-phosphate (GlcNAc-1-P), which is converted into UDP-GlcNAc by the transfer of uridine 5-monophosphate (from uridine 5-triphosphate), a reaction catalyzed by the N-terminal domain. This Prochlorococcus marinus (strain AS9601) protein is Bifunctional protein GlmU.